A 128-amino-acid polypeptide reads, in one-letter code: Fluoride-specific ion channel FluC (128 aa).

Transmembrane regions (helical) follow at residues 7 to 29, 36 to 57, 65 to 94, and 98 to 126; these read LNFI…LGLR, PWGT…VALI, AWIR…DMLE, and YATA…VRLL. Residue N43 coordinates fluoride. Na(+) contacts are provided by G77 and T80. Fluoride is bound by residues Y104, S108, and S112.

It belongs to the fluoride channel Fluc/FEX (TC 1.A.43) family. In terms of assembly, homodimer.

The protein resides in the cell inner membrane. The enzyme catalyses fluoride(in) = fluoride(out). Its activity is regulated as follows. Na(+) is not transported, but it plays an essential structural role and its presence is essential for fluoride channel function. The Na(+)-binding site is specific for Na(+) over most other cations including K(+) and Mg(2+). Fluoride efflux is inhibited by Li(2+). Its function is as follows. Fluoride-specific ion channel. Important for reducing fluoride concentration in the cell, thus reducing its toxicity. Is highly specific for fluoride ions and cannot transport chloride ions. This is Fluoride-specific ion channel FluC from Bordetella pertussis (strain Tohama I / ATCC BAA-589 / NCTC 13251).